We begin with the raw amino-acid sequence, 360 residues long: uncharacterized protein (360 aa).

The segment at 1 to 33 (MSGRRKGCSAATASSSSSSPPSRLPPLPGHARR) is disordered.

This sequence belongs to the herpesviridae US22 family.

This is an uncharacterized protein from Human cytomegalovirus (strain AD169) (HHV-5).